The sequence spans 519 residues: Serine/threonine-protein kinase RIO3 (519 aa).

2 positions are modified to phosphoserine: Ser-8 and Ser-112. The disordered stretch occupies residues 121–159 (PYEDSDSSEDEVDWQDTRDDPYRPAKPVPTPKKGFIGKG). A Phosphotyrosine modification is found at Tyr-122. Acidic residues predominate over residues 124 to 134 (DSDSSEDEVDW). Ser-125, Ser-127, and Ser-128 each carry phosphoserine. The 269-residue stretch at 251-519 (ETITGCISTG…DGDPPLLYDE (269 aa)) folds into the Protein kinase domain. ATP contacts are provided by residues 257–265 (ISTGKESVV) and Lys-290. Asp-406 serves as the catalytic Proton acceptor.

The protein belongs to the protein kinase superfamily. RIO-type Ser/Thr kinase family. As to quaternary structure, interacts with CASP10. Interacts with IRF3; RIOK3 probably mediates the interaction of TBK1 with IRF3. Associated with 40S pre-ribosomal particles. It depends on Mg(2+) as a cofactor. In terms of processing, autophosphorylated (in vitro). As to expression, widely expressed.

The protein resides in the cytoplasm. It carries out the reaction L-seryl-[protein] + ATP = O-phospho-L-seryl-[protein] + ADP + H(+). The catalysed reaction is L-threonyl-[protein] + ATP = O-phospho-L-threonyl-[protein] + ADP + H(+). Functionally, involved in regulation of type I interferon (IFN)-dependent immune response which plays a critical role in the innate immune response against DNA and RNA viruses. May act as an adapter protein essential for the recruitment of TBK1 to IRF3. Phosphorylates IFIH1 on 'Ser-828' interfering with IFIH1 filament assembly on long dsRNA and resulting in attenuated IFIH1-signaling. Can inhibit CASP10 isoform 7-mediated activation of the NF-kappaB signaling pathway. May play a role in the biogenesis of the 40S ribosomal subunit. Involved in the processing of 21S pre-rRNA to the mature 18S rRNA. This is Serine/threonine-protein kinase RIO3 (RIOK3) from Homo sapiens (Human).